The following is a 962-amino-acid chain: Spliceosome associated factor 3, U4/U6 recycling protein (962 aa).

Residues 1–21 (MATTAASSASEPEVEPQAGPE) show a composition bias toward low complexity. The segment at 1–92 (MATTAASSAS…EDEWEYDEEE (92 aa)) is disordered. Ala2 is modified (N-acetylalanine). Residues 2 to 352 (ATTAASSASE…LVPDLWIRYS (351 aa)) are mediates interaction with PRPF3. Position 10 is a phosphoserine (Ser10). The segment covering 81 to 92 (AGEDEWEYDEEE) has biased composition (acidic residues). HAT repeat units follow at residues 127–159 (GELSRVRAARQKMSELFPLTEELWLEWLHDEIS), 165–196 (LDREHVYELFERAVKDYICPNIWLEYGQYSVG), 202–238 (GGLEKVRSVFERALSSVGLHMTKGLAIWEAYREFESA), 243–276 (ARLEKVHSLFRRQLAIPLYEMEATFAEYEEWSEE), 325–357 (GDPARIQLIFERALVENCLVPDLWIRYSQYLDR), 360–392 (KVKDLVLSVHSRAVRNCPWTVALWSRYLLAMER), 395–431 (LDHQTISATFENALSAGFIQATDYVEIWQVYLDYLRR), 441–474 (KELEELRSMFTRALEYLQQEVEERFSESGDPSCL), and 488–521 (NNMQKARELWDSIMTRGNAKYANMWLEYYNLERA). Phosphoserine is present on Ser216. Positions 488-521 (NNMQKARELWDSIMTRGNAKYANMWLEYYNLERA) are required for interaction with USP4. The segment at 538–952 (CTSDYPEHVC…VATEAPKMSN (415 aa)) is necessary and sufficient for U6 snRNA binding. The stretch at 559-618 (TLEDWDLAIQKTETRLARVNEQRMKAAEKEAALVQQEEEKAEQRKKVRAEKKALKKKKKT) forms a coiled coil. Residues 591–602 (LVQQEEEKAEQR) show a composition bias toward basic and acidic residues. Positions 591–696 (LVQQEEEKAE…SLKRDMPKVA (106 aa)) are disordered. Residues 601 to 670 (QRKKVRAEKK…KEETELSGKC (70 aa)) form a required for nuclear localization region. The short motif at 602–609 (RKKVRAEK) is the Nuclear localization signal element. A compositionally biased stretch (basic residues) spans 603–618 (KKVRAEKKALKKKKKT). The span at 627 to 640 (DEDEENEWGEEEEE) shows a compositional bias: acidic residues. Phosphoserine is present on Ser651. The span at 680-696 (KQKEKAASLKRDMPKVA) shows a compositional bias: basic and acidic residues. The region spanning 704–782 (VTVFVSNLPY…RPMFVSPCVD (79 aa)) is the RRM 1 domain. 2 positions are modified to phosphoserine: Ser795 and Ser852. The 78-residue stretch at 801-878 (HKLFISGLPF…NVIKVAISNP (78 aa)) folds into the RRM 2 domain. The interval 880-962 (QRKVPEKPEV…ADFAKLLLRK (83 aa)) is disordered. Arg906 is subject to Omega-N-methylarginine.

In terms of assembly, component of the 7SK snRNP complex at least composed of P-TEFb (composed of CDK9 and CCNT1/cyclin-T1), HEXIM1, HEXIM2, BCDIN3, SART3 proteins and 7SK and U6 snRNAs. Interacts with AGO1 and AGO2. Interacts with PRPF3 and USP4; the interaction with PRPF3 is direct and recruits USP4 to its substrate PRPF3. Interacts with USP15; the interaction is direct. As to expression, ubiquitously expressed, with low level of expression in liver, heart and skeletal. Also detected in hematopoietic cells (at protein level).

It localises to the nucleus. It is found in the nucleoplasm. The protein localises to the cajal body. The protein resides in the nucleus speckle. Its subcellular location is the cytoplasm. U6 snRNP-binding protein that functions as a recycling factor of the splicing machinery. Promotes the initial reassembly of U4 and U6 snRNPs following their ejection from the spliceosome during its maturation. Also binds U6atac snRNPs and may function as a recycling factor for U4atac/U6atac spliceosomal snRNP, an initial step in the assembly of U12-type spliceosomal complex. The U12-type spliceosomal complex plays a role in the splicing of introns with non-canonical splice sites. May also function as a substrate-targeting factor for deubiquitinases like USP4 and USP15. Recruits USP4 to ubiquitinated PRPF3 within the U4/U5/U6 tri-snRNP complex, promoting PRPF3 deubiquitination and thereby regulating the spliceosome U4/U5/U6 tri-snRNP spliceosomal complex disassembly. May also recruit the deubiquitinase USP15 to histone H2B and mediate histone deubiquitination, thereby regulating gene expression and/or DNA repair. May play a role in hematopoiesis probably through transcription regulation of specific genes including MYC. This Mus musculus (Mouse) protein is Spliceosome associated factor 3, U4/U6 recycling protein.